The following is a 379-amino-acid chain: MSTVFPEDSVGLVVPQTARFDEPLALACGRSLASYELVYETYGTLNASASNAVLICHALSGHHHAAGYHAATDRKPGWWDSCIGPGKPIDTNRFFVVSLNNLGGCNGSTGPSSVNPATGKPYGADFPVLTVEDWVHSQVRLGERLGIQQWAAVVGGSLGGMQALQWTISYPERVRHCVDIASAPKLSAQNIAFNEVARQAILTDPEFHGGSFQDQGVIPKRGLMLARMVGHITYLSDDSMGEKFGRELKSDKLNYDFHSVEFQVESYLRYQGEEFSGRFDANTYLLMTKALDYFDPAATHGGDLAATLAHVTADYCIMSFTTDWRFSPARSREIVDALMAARKNVCYLEIDSPYGHDAFLIPTPRYMQGFSNYMNRIAI.

The 310-residue stretch at 51-360 (NAVLICHALS…DSPYGHDAFL (310 aa)) folds into the AB hydrolase-1 domain. Ser-157 serves as the catalytic Nucleophile. Arg-227 contacts substrate. Residues Asp-323 and His-356 contribute to the active site. Residue Asp-357 coordinates substrate.

This sequence belongs to the AB hydrolase superfamily. MetX family. In terms of assembly, homodimer.

The protein resides in the cytoplasm. It catalyses the reaction L-homoserine + succinyl-CoA = O-succinyl-L-homoserine + CoA. The protein operates within amino-acid biosynthesis; L-methionine biosynthesis via de novo pathway; O-succinyl-L-homoserine from L-homoserine: step 1/1. With respect to regulation, requires MetW for activity. Functionally, transfers a succinyl group from succinyl-CoA to L-homoserine, forming succinyl-L-homoserine. This is Homoserine O-succinyltransferase from Pseudomonas putida (strain ATCC 47054 / DSM 6125 / CFBP 8728 / NCIMB 11950 / KT2440).